Consider the following 596-residue polypeptide: Isocitrate dehydrogenase kinase/phosphatase (596 aa).

ATP contacts are provided by residues 316–322 (APGIRGM) and Lys-337. Residue Asp-372 is part of the active site.

It belongs to the AceK family.

The protein resides in the cytoplasm. The catalysed reaction is L-seryl-[isocitrate dehydrogenase] + ATP = O-phospho-L-seryl-[isocitrate dehydrogenase] + ADP + H(+). Functionally, bifunctional enzyme which can phosphorylate or dephosphorylate isocitrate dehydrogenase (IDH) on a specific serine residue. This is a regulatory mechanism which enables bacteria to bypass the Krebs cycle via the glyoxylate shunt in response to the source of carbon. When bacteria are grown on glucose, IDH is fully active and unphosphorylated, but when grown on acetate or ethanol, the activity of IDH declines drastically concomitant with its phosphorylation. The sequence is that of Isocitrate dehydrogenase kinase/phosphatase from Cronobacter sakazakii (strain ATCC BAA-894) (Enterobacter sakazakii).